A 78-amino-acid polypeptide reads, in one-letter code: Acyl carrier protein (78 aa).

The Carrier domain occupies 2–77; it reads STIEERVKKI…AAIDFINANQ (76 aa). Residue Ser-37 is modified to O-(pantetheine 4'-phosphoryl)serine.

This sequence belongs to the acyl carrier protein (ACP) family. Post-translationally, 4'-phosphopantetheine is transferred from CoA to a specific serine of apo-ACP by AcpS. This modification is essential for activity because fatty acids are bound in thioester linkage to the sulfhydryl of the prosthetic group.

The protein resides in the cytoplasm. It participates in lipid metabolism; fatty acid biosynthesis. Its function is as follows. Carrier of the growing fatty acid chain in fatty acid biosynthesis. The protein is Acyl carrier protein of Yersinia pseudotuberculosis serotype O:1b (strain IP 31758).